The sequence spans 127 residues: Small ribosomal subunit protein uS12 (127 aa).

D89 bears the 3-methylthioaspartic acid mark.

It belongs to the universal ribosomal protein uS12 family. Part of the 30S ribosomal subunit. Contacts proteins S8 and S17. May interact with IF1 in the 30S initiation complex.

Functionally, with S4 and S5 plays an important role in translational accuracy. Interacts with and stabilizes bases of the 16S rRNA that are involved in tRNA selection in the A site and with the mRNA backbone. Located at the interface of the 30S and 50S subunits, it traverses the body of the 30S subunit contacting proteins on the other side and probably holding the rRNA structure together. The combined cluster of proteins S8, S12 and S17 appears to hold together the shoulder and platform of the 30S subunit. This chain is Small ribosomal subunit protein uS12, found in Campylobacter fetus subsp. fetus (strain 82-40).